A 1169-amino-acid chain; its full sequence is Transcription-repair-coupling factor (1169 aa).

In terms of domain architecture, Helicase ATP-binding spans 634-795 (DMERARPMDR…MLGVRDLSVI (162 aa)). ATP is bound at residue 647–654 (GDVGYGKT). A DEEQ box motif is present at residues 748–751 (DEEQ). A Helicase C-terminal domain is found at 809–970 (VLEQNTNFIK…GFKIAMRDLN (162 aa)).

It in the N-terminal section; belongs to the UvrB family. The protein in the C-terminal section; belongs to the helicase family. RecG subfamily.

It is found in the cytoplasm. Functionally, couples transcription and DNA repair by recognizing RNA polymerase (RNAP) stalled at DNA lesions. Mediates ATP-dependent release of RNAP and its truncated transcript from the DNA, and recruitment of nucleotide excision repair machinery to the damaged site. The protein is Transcription-repair-coupling factor of Staphylococcus epidermidis (strain ATCC 35984 / DSM 28319 / BCRC 17069 / CCUG 31568 / BM 3577 / RP62A).